An 87-amino-acid chain; its full sequence is Small ribosomal subunit protein bS20 (87 aa).

The disordered stretch occupies residues 1-25 (MANIKSAKKRAVQSEKRRKHNASRR).

This sequence belongs to the bacterial ribosomal protein bS20 family.

In terms of biological role, binds directly to 16S ribosomal RNA. The protein is Small ribosomal subunit protein bS20 of Yersinia pseudotuberculosis serotype O:1b (strain IP 31758).